A 104-amino-acid polypeptide reads, in one-letter code: Putative protein 22K (104 aa).

The tract at residues 35-104 (YKQLEKELGE…KAPAAKAPSK (70 aa)) is disordered. Residues 60 to 78 (PLSEGELEEISEEEEEEGE) are compositionally biased toward acidic residues. Positions 94 to 104 (SKAPAAKAPSK) are enriched in low complexity.

This chain is Putative protein 22K, found in Snake adenovirus serotype 1 (SnAdV-1).